The sequence spans 322 residues: Cytochrome c biogenesis protein CcsA (322 aa).

The next 8 helical transmembrane spans lie at 9 to 29 (ILTH…LITL), 44 to 64 (GMIA…IYSG), 71 to 91 (LYES…VPYF), 98 to 118 (LTTI…SGLL), 143 to 163 (MILS…LLVI), 226 to 246 (VISL…VWAN), 253 to 273 (WSWD…AIYL), and 287 to 307 (AIVA…VNLL).

The protein belongs to the CcmF/CycK/Ccl1/NrfE/CcsA family. As to quaternary structure, may interact with Ccs1.

Its subcellular location is the plastid. It is found in the chloroplast thylakoid membrane. Functionally, required during biogenesis of c-type cytochromes (cytochrome c6 and cytochrome f) at the step of heme attachment. In Guizotia abyssinica (Niger), this protein is Cytochrome c biogenesis protein CcsA.